Reading from the N-terminus, the 129-residue chain is Large ribosomal subunit protein bL12 (129 aa).

Belongs to the bacterial ribosomal protein bL12 family. In terms of assembly, homodimer. Part of the ribosomal stalk of the 50S ribosomal subunit. Forms a multimeric L10(L12)X complex, where L10 forms an elongated spine to which 2 to 4 L12 dimers bind in a sequential fashion. Binds GTP-bound translation factors.

Forms part of the ribosomal stalk which helps the ribosome interact with GTP-bound translation factors. Is thus essential for accurate translation. This chain is Large ribosomal subunit protein bL12, found in Micrococcus luteus (strain ATCC 4698 / DSM 20030 / JCM 1464 / CCM 169 / CCUG 5858 / IAM 1056 / NBRC 3333 / NCIMB 9278 / NCTC 2665 / VKM Ac-2230) (Micrococcus lysodeikticus).